Reading from the N-terminus, the 340-residue chain is Meiotic recombination protein DMC1/LIM15 homolog (340 aa).

126 to 133 (GEFRTGKT) serves as a coordination point for ATP. Arg230 lines the dsDNA pocket. The ssDNA site is built by Arg230, Phe233, Arg236, Arg242, and Arg311. 2 residues coordinate dsDNA: Arg236 and Arg242.

It belongs to the RecA family. DMC1 subfamily. As to quaternary structure, double stacked ring-shaped homooctamer. Interacts with BRCA2. Interacts with the MND1-PSMC3IP heterodimer. Interacts with RAD51AP1; the interaction is direct and stimulates DMC1-mediated homologous recombination. In terms of tissue distribution, testis.

Its subcellular location is the nucleus. It localises to the chromosome. Its function is as follows. Participates in meiotic recombination, specifically in homologous strand assimilation, which is required for the resolution of meiotic double-strand breaks. This chain is Meiotic recombination protein DMC1/LIM15 homolog, found in Mus musculus (Mouse).